Here is a 124-residue protein sequence, read N- to C-terminus: Small ribosomal subunit protein uS12 (124 aa).

Position 89 is a 3-methylthioaspartic acid (Asp89). The tract at residues Thr104–Glu124 is disordered.

The protein belongs to the universal ribosomal protein uS12 family. Part of the 30S ribosomal subunit. Contacts proteins S8 and S17. May interact with IF1 in the 30S initiation complex.

Its function is as follows. With S4 and S5 plays an important role in translational accuracy. In terms of biological role, interacts with and stabilizes bases of the 16S rRNA that are involved in tRNA selection in the A site and with the mRNA backbone. Located at the interface of the 30S and 50S subunits, it traverses the body of the 30S subunit contacting proteins on the other side and probably holding the rRNA structure together. The combined cluster of proteins S8, S12 and S17 appears to hold together the shoulder and platform of the 30S subunit. The chain is Small ribosomal subunit protein uS12 from Synechococcus sp. (strain CC9605).